The sequence spans 908 residues: Translation initiation factor IF-2 (908 aa).

The disordered stretch occupies residues Gln52–Phe318. Polar residues predominate over residues Lys65 to Val84. Basic and acidic residues-rich tracts occupy residues Phe94–Ala108, Ala120–Gln138, Ile176–Lys185, Pro193–Arg238, Ser270–Arg280, and Lys294–Asn303. A tr-type G domain is found at Thr409 to Glu578. A G1 region spans residues Gly418 to Thr425. Gly418 to Thr425 contacts GTP. Residues Gly443 to His447 are G2. A G3 region spans residues Asp464–Gly467. GTP contacts are provided by residues Asp464–His468 and Asn518–Asp521. The segment at Asn518 to Asp521 is G4. Residues Ser554–Lys556 are G5.

Belongs to the TRAFAC class translation factor GTPase superfamily. Classic translation factor GTPase family. IF-2 subfamily.

It is found in the cytoplasm. In terms of biological role, one of the essential components for the initiation of protein synthesis. Protects formylmethionyl-tRNA from spontaneous hydrolysis and promotes its binding to the 30S ribosomal subunits. Also involved in the hydrolysis of GTP during the formation of the 70S ribosomal complex. The protein is Translation initiation factor IF-2 of Psychrobacter cryohalolentis (strain ATCC BAA-1226 / DSM 17306 / VKM B-2378 / K5).